The chain runs to 407 residues: 1-deoxy-D-xylulose 5-phosphate reductoisomerase (407 aa).

Residues T25, G26, S27, I28, N53, and N136 each coordinate NADPH. K137 lines the 1-deoxy-D-xylulose 5-phosphate pocket. Residue E138 coordinates NADPH. D162 contacts Mn(2+). 1-deoxy-D-xylulose 5-phosphate is bound by residues S163, E164, S188, and H211. E164 contacts Mn(2+). G217 contributes to the NADPH binding site. S224, N229, K230, and E233 together coordinate 1-deoxy-D-xylulose 5-phosphate. E233 contacts Mn(2+).

This sequence belongs to the DXR family. Mg(2+) serves as cofactor. It depends on Mn(2+) as a cofactor.

The catalysed reaction is 2-C-methyl-D-erythritol 4-phosphate + NADP(+) = 1-deoxy-D-xylulose 5-phosphate + NADPH + H(+). It functions in the pathway isoprenoid biosynthesis; isopentenyl diphosphate biosynthesis via DXP pathway; isopentenyl diphosphate from 1-deoxy-D-xylulose 5-phosphate: step 1/6. Catalyzes the NADPH-dependent rearrangement and reduction of 1-deoxy-D-xylulose-5-phosphate (DXP) to 2-C-methyl-D-erythritol 4-phosphate (MEP). The polypeptide is 1-deoxy-D-xylulose 5-phosphate reductoisomerase (Rhodopseudomonas palustris (strain TIE-1)).